The sequence spans 416 residues: Tyrosine--tRNA ligase (416 aa).

Tyr-40 contacts L-tyrosine. The 'HIGH' region motif lies at 45-54; sequence ATAASLHVGH. The L-tyrosine site is built by Tyr-177 and Gln-181. A 'KMSKS' region motif is present at residues 237 to 241; it reads KMGKS. Residue Lys-240 participates in ATP binding. The 66-residue stretch at 351–416 folds into the S4 RNA-binding domain; sequence LSVAHFLVAA…RKKHKLVRLS (66 aa).

Belongs to the class-I aminoacyl-tRNA synthetase family. TyrS type 1 subfamily. As to quaternary structure, homodimer.

The protein localises to the cytoplasm. The enzyme catalyses tRNA(Tyr) + L-tyrosine + ATP = L-tyrosyl-tRNA(Tyr) + AMP + diphosphate + H(+). Catalyzes the attachment of tyrosine to tRNA(Tyr) in a two-step reaction: tyrosine is first activated by ATP to form Tyr-AMP and then transferred to the acceptor end of tRNA(Tyr). The chain is Tyrosine--tRNA ligase from Cereibacter sphaeroides (strain ATCC 17029 / ATH 2.4.9) (Rhodobacter sphaeroides).